The following is a 160-amino-acid chain: Major pollen allergen Bet v 1-A (160 aa).

Brassinolide is bound by residues K55, Y82, Y84, and N101.

Belongs to the BetVI family.

The protein resides in the cytoplasm. Functionally, may be a general steroid carrier protein. This Betula pendula (European white birch) protein is Major pollen allergen Bet v 1-A (BETVIA).